A 467-amino-acid chain; its full sequence is tRNA modification GTPase MnmE (467 aa).

The (6S)-5-formyl-5,6,7,8-tetrahydrofolate site is built by Arg30, Glu92, and Arg131. Residues 226–388 (GLKVAIIGRP…LEAAILNAVN (163 aa)) form the TrmE-type G domain. Asn236 is a K(+) binding site. GTP contacts are provided by residues 236-241 (NVGKSS), 255-261 (TDLPGTT), and 280-283 (DTAG). Residue Ser240 participates in Mg(2+) binding. Residues Thr255, Leu257, and Thr260 each coordinate K(+). Thr261 provides a ligand contact to Mg(2+). Lys467 lines the (6S)-5-formyl-5,6,7,8-tetrahydrofolate pocket.

This sequence belongs to the TRAFAC class TrmE-Era-EngA-EngB-Septin-like GTPase superfamily. TrmE GTPase family. Homodimer. Heterotetramer of two MnmE and two MnmG subunits. Requires K(+) as cofactor.

Its subcellular location is the cytoplasm. Its function is as follows. Exhibits a very high intrinsic GTPase hydrolysis rate. Involved in the addition of a carboxymethylaminomethyl (cmnm) group at the wobble position (U34) of certain tRNAs, forming tRNA-cmnm(5)s(2)U34. The polypeptide is tRNA modification GTPase MnmE (Trichodesmium erythraeum (strain IMS101)).